The sequence spans 367 residues: Glutamate 5-kinase (367 aa).

Position 10 (Lys10) interacts with ATP. Substrate-binding residues include Ser50, Asp137, and Asn149. ATP contacts are provided by residues 169 to 170 (TD) and 211 to 217 (TGGMGTK). Residues 275-353 (AGEITVDEGA…QQIDAILGYE (79 aa)) enclose the PUA domain.

It belongs to the glutamate 5-kinase family.

The protein resides in the cytoplasm. It catalyses the reaction L-glutamate + ATP = L-glutamyl 5-phosphate + ADP. It participates in amino-acid biosynthesis; L-proline biosynthesis; L-glutamate 5-semialdehyde from L-glutamate: step 1/2. Its function is as follows. Catalyzes the transfer of a phosphate group to glutamate to form L-glutamate 5-phosphate. The sequence is that of Glutamate 5-kinase from Enterobacter sp. (strain 638).